Reading from the N-terminus, the 609-residue chain is Albumin (609 aa).

The N-terminal stretch at 1–18 (MKWVTFISLLFLFSSAYS) is a signal peptide. Positions 19 to 24 (RGVFRR) are excised as a propeptide. Albumin domains are found at residues 19–210 (RGVF…DELR), 211–403 (DEGK…EFKP), and 404–601 (LVEE…KLVA). Cu cation is bound at residue histidine 27. Serine 29 carries the phosphoserine modification. Positions 30 and 37 each coordinate Ca(2+). Cysteine 77 and cysteine 86 form a disulfide bridge. Phosphoserine is present on residues serine 82 and serine 89. Histidine 91 lines the Zn(2+) pocket. 6 cysteine pairs are disulfide-bonded: cysteine 99–cysteine 115, cysteine 114–cysteine 125, cysteine 148–cysteine 193, cysteine 192–cysteine 201, cysteine 224–cysteine 270, and cysteine 269–cysteine 277. Position 107 is a phosphothreonine (threonine 107). Lysine 229 is subject to N6-succinyllysine. Lysine 264 contacts (4Z,15Z)-bilirubin IXalpha. Ca(2+) is bound at residue glutamate 268. Residues histidine 271 and aspartate 273 each coordinate Zn(2+). Aspartate 273, glutamate 276, aspartate 279, and aspartate 283 together coordinate Ca(2+). 8 disulfides stabilise this stretch: cysteine 289–cysteine 303, cysteine 302–cysteine 313, cysteine 340–cysteine 385, cysteine 384–cysteine 393, cysteine 416–cysteine 462, cysteine 461–cysteine 472, cysteine 485–cysteine 501, and cysteine 500–cysteine 511. The residue at position 297 (serine 297) is a Phosphoserine. At serine 443 the chain carries Phosphoserine. 2 positions are modified to phosphothreonine: threonine 444 and threonine 446. The residue at position 460 (lysine 460) is an N6-succinyllysine. Serine 513 carries the post-translational modification Phosphoserine. 2 cysteine pairs are disulfide-bonded: cysteine 538/cysteine 583 and cysteine 582/cysteine 591. Lysine 543 carries the N6-succinyllysine modification. Lysine 558 carries the post-translational modification N6-methyllysine. At threonine 570 the chain carries Phosphothreonine. Lysine 588 is modified (N6-succinyllysine).

The protein belongs to the ALB/AFP/VDB family. Interacts with FCGRT; this interaction regulates ALB homeostasis. Interacts with TASOR. In plasma, occurs in a covalently-linked complex with chromophore-bound alpha-1-microglobulin; this interaction does not prevent fatty acid binding to ALB. In terms of processing, phosphorylated by FAM20C in the extracellular medium. In terms of tissue distribution, plasma.

Its subcellular location is the secreted. Functionally, binds water, Ca(2+), Na(+), K(+), fatty acids, hormones, bilirubin and drugs. Its main function is the regulation of the colloidal osmotic pressure of blood. Major zinc transporter in plasma, typically binds about 80% of all plasma zinc. Major calcium and magnesium transporter in plasma, binds approximately 45% of circulating calcium and magnesium in plasma. Potentially has more than two calcium-binding sites and might additionally bind calcium in a non-specific manner. The shared binding site between zinc and calcium at residue Asp-273 suggests a crosstalk between zinc and calcium transport in the blood. The rank order of affinity is zinc &gt; calcium &gt; magnesium. Binds to the bacterial siderophore enterobactin and inhibits enterobactin-mediated iron uptake of E.coli from ferric transferrin, and may thereby limit the utilization of iron and growth of enteric bacteria such as E.coli. Does not prevent iron uptake by the bacterial siderophore aerobactin. This Pongo abelii (Sumatran orangutan) protein is Albumin (ALB).